The following is a 170-amino-acid chain: Probable calcium-binding protein CML27 (170 aa).

Ala2 bears the N-acetylalanine mark. 4 consecutive EF-hand domains span residues 19 to 54, 55 to 85, 88 to 123, and 136 to 159; these read ANPE…MGTS, YTET…TLCR, SSAA…LGMS, and VDAD…SSLL. Positions 32, 34, 36, 38, 43, 68, 70, 72, 74, 79, 101, 103, 105, 112, 137, 139, 141, 143, and 148 each coordinate Ca(2+).

Functionally, potential calcium sensor. This is Probable calcium-binding protein CML27 (CML27) from Arabidopsis thaliana (Mouse-ear cress).